Consider the following 336-residue polypeptide: Holliday junction branch migration complex subunit RuvB (336 aa).

The tract at residues 1 to 183 (MATERLVAGN…FGINSRLEFY (183 aa)) is large ATPase domain (RuvB-L). Residues Leu-22, Arg-23, Gly-64, Lys-67, Thr-68, Thr-69, 130–132 (EDF), Arg-173, Tyr-183, and Arg-220 each bind ATP. A Mg(2+)-binding site is contributed by Thr-68. The tract at residues 184–254 (QVAELEEIIR…VAREALELLQ (71 aa)) is small ATPAse domain (RuvB-S). A head domain (RuvB-H) region spans residues 257-336 (AAGLDSSDRR…LGIKPEDRLF (80 aa)). Residues Arg-312 and Arg-317 each coordinate DNA.

Belongs to the RuvB family. As to quaternary structure, homohexamer. Forms an RuvA(8)-RuvB(12)-Holliday junction (HJ) complex. HJ DNA is sandwiched between 2 RuvA tetramers; dsDNA enters through RuvA and exits via RuvB. An RuvB hexamer assembles on each DNA strand where it exits the tetramer. Each RuvB hexamer is contacted by two RuvA subunits (via domain III) on 2 adjacent RuvB subunits; this complex drives branch migration. In the full resolvosome a probable DNA-RuvA(4)-RuvB(12)-RuvC(2) complex forms which resolves the HJ.

The protein resides in the cytoplasm. It carries out the reaction ATP + H2O = ADP + phosphate + H(+). Functionally, the RuvA-RuvB-RuvC complex processes Holliday junction (HJ) DNA during genetic recombination and DNA repair, while the RuvA-RuvB complex plays an important role in the rescue of blocked DNA replication forks via replication fork reversal (RFR). RuvA specifically binds to HJ cruciform DNA, conferring on it an open structure. The RuvB hexamer acts as an ATP-dependent pump, pulling dsDNA into and through the RuvAB complex. RuvB forms 2 homohexamers on either side of HJ DNA bound by 1 or 2 RuvA tetramers; 4 subunits per hexamer contact DNA at a time. Coordinated motions by a converter formed by DNA-disengaged RuvB subunits stimulates ATP hydrolysis and nucleotide exchange. Immobilization of the converter enables RuvB to convert the ATP-contained energy into a lever motion, pulling 2 nucleotides of DNA out of the RuvA tetramer per ATP hydrolyzed, thus driving DNA branch migration. The RuvB motors rotate together with the DNA substrate, which together with the progressing nucleotide cycle form the mechanistic basis for DNA recombination by continuous HJ branch migration. Branch migration allows RuvC to scan DNA until it finds its consensus sequence, where it cleaves and resolves cruciform DNA. The chain is Holliday junction branch migration complex subunit RuvB from Moorella thermoacetica (strain ATCC 39073 / JCM 9320).